A 414-amino-acid polypeptide reads, in one-letter code: MTIKSLALQCRDAAQVLSQLSADAKQALLLAMANALDTDATQILQANQRDVDAAREKGTGAAMLDRLTLTPARLSAVGAALREVAVLPDPVGQVTRDDVRPNGIRVQKVRVPLGVIAMIYEARPNVTADAAALCIKAGNGVILRGGSEAIHSNTAIARALQGALREANVPEAALTLVEDLRRETMLELLQLSDIVDLAIPRGGEGLIRFVAEHARVPVIKHYKGVCHLFVDASADVDLAVRLLVDGKASRPSACNSLETLLVHADIAERFLPAAAAALRARNVELRGDAATRAVLPEIAAASDDDYAAEFLDLILAIRVVPDLDTALAHIRQYGSDHTEVIATQTPANAETFVQSLRSAVVMVNASSRFSDGGELGLGAEIGISTTRLHSYGPMGLEALTVERFVVRGEGQVRH.

The protein belongs to the gamma-glutamyl phosphate reductase family.

The protein resides in the cytoplasm. It carries out the reaction L-glutamate 5-semialdehyde + phosphate + NADP(+) = L-glutamyl 5-phosphate + NADPH + H(+). It functions in the pathway amino-acid biosynthesis; L-proline biosynthesis; L-glutamate 5-semialdehyde from L-glutamate: step 2/2. Functionally, catalyzes the NADPH-dependent reduction of L-glutamate 5-phosphate into L-glutamate 5-semialdehyde and phosphate. The product spontaneously undergoes cyclization to form 1-pyrroline-5-carboxylate. This is Gamma-glutamyl phosphate reductase from Xanthomonas campestris pv. campestris (strain ATCC 33913 / DSM 3586 / NCPPB 528 / LMG 568 / P 25).